A 437-amino-acid polypeptide reads, in one-letter code: Carbonic anhydrase 9 (437 aa).

Residues 1–31 form the signal peptide; it reads MASLGPSPWAPLSTPAPTAQLLLFLLLQVSA. A proteoglycan-like (PG) region spans residues 32-95; that stretch reads QPQGLSGMQG…RMEESLGLED (64 aa). Residues 32 to 390 are Extracellular-facing; it reads QPQGLSGMQG…HVNSCFTAGD (359 aa). The disordered stretch occupies residues 34 to 118; the sequence is QGLSGMQGEP…HGDEKGGGHS (85 aa). Acidic residues predominate over residues 50–79; the sequence is SGEDELGVDVLPSEEDAPEEADPPDGEDPP. The segment at 96 to 390 is catalytic; it reads LSTPEAPEHS…HVNSCFTAGD (295 aa). A glycan (O-linked (GlcNAc...) threonine) is linked at Thr98. The Alpha-carbonic anhydrase domain occupies 118-369; sequence SHWSYGGTLL…LNGRTIEASF (252 aa). Cys135 and Cys315 are oxidised to a cystine. Catalysis depends on His179, which acts as the Proton donor/acceptor. The Zn(2+) site is built by His205, His207, and His230. 311–312 contributes to the substrate binding site; that stretch reads TT. N-linked (GlcNAc...) asparagine glycosylation occurs at Asn325. A helical membrane pass occupies residues 391 to 411; it reads ILALVFGLLFAVTSIAFLLQL. At 412–437 the chain is on the cytoplasmic side; that stretch reads RRQHRHRSGTKDRVSYSPAEMTETGA. Tyr427 is modified (phosphotyrosine).

Belongs to the alpha-carbonic anhydrase family. As to quaternary structure, forms oligomers linked by disulfide bonds. Requires Zn(2+) as cofactor. Post-translationally, asn-325 bears high-mannose type glycan structures.

It is found in the nucleus. Its subcellular location is the nucleolus. The protein resides in the cell membrane. The protein localises to the cell projection. It localises to the microvillus membrane. The catalysed reaction is hydrogencarbonate + H(+) = CO2 + H2O. Inhibited by acetazolamide. Functionally, catalyzes the interconversion between carbon dioxide and water and the dissociated ions of carbonic acid (i.e. bicarbonate and hydrogen ions). The sequence is that of Carbonic anhydrase 9 (Ca9) from Mus musculus (Mouse).